Reading from the N-terminus, the 413-residue chain is Multifunctional CCA protein (413 aa).

ATP is bound by residues Gly8 and Arg11. 2 residues coordinate CTP: Gly8 and Arg11. The Mg(2+) site is built by Asp21 and Asp23. ATP-binding residues include Arg91, Arg137, and Arg140. Positions 91, 137, and 140 each coordinate CTP. One can recognise an HD domain in the interval 228-329 (TGVHTLMTLS…VKLFDAIDAW (102 aa)).

Belongs to the tRNA nucleotidyltransferase/poly(A) polymerase family. Bacterial CCA-adding enzyme type 1 subfamily. As to quaternary structure, monomer. Can also form homodimers and oligomers. Requires Mg(2+) as cofactor. The cofactor is Ni(2+).

It catalyses the reaction a tRNA precursor + 2 CTP + ATP = a tRNA with a 3' CCA end + 3 diphosphate. The enzyme catalyses a tRNA with a 3' CCA end + 2 CTP + ATP = a tRNA with a 3' CCACCA end + 3 diphosphate. In terms of biological role, catalyzes the addition and repair of the essential 3'-terminal CCA sequence in tRNAs without using a nucleic acid template. Adds these three nucleotides in the order of C, C, and A to the tRNA nucleotide-73, using CTP and ATP as substrates and producing inorganic pyrophosphate. tRNA 3'-terminal CCA addition is required both for tRNA processing and repair. Also involved in tRNA surveillance by mediating tandem CCA addition to generate a CCACCA at the 3' terminus of unstable tRNAs. While stable tRNAs receive only 3'-terminal CCA, unstable tRNAs are marked with CCACCA and rapidly degraded. The polypeptide is Multifunctional CCA protein (Salmonella schwarzengrund (strain CVM19633)).